Consider the following 1958-residue polypeptide: Probable Rho GTPase-activating protein CG5521 (1958 aa).

Disordered stretches follow at residues 1-21 (MFTK…QDSK), 400-424 (PPFL…RSQR), and 635-804 (GSVW…GIEG). Residues 400-414 (PPFLLEPNDDPPPPS) are compositionally biased toward pro residues. Over residues 640–656 (GSGSNSAANGGSAASAA) the composition is skewed to low complexity. S718, S764, and S767 each carry phosphoserine. Basic and acidic residues predominate over residues 758 to 774 (DLRRAMSLDSLARKGDA). The segment covering 775–785 (EETDSYQEGDN) has biased composition (acidic residues). 4 positions are modified to phosphoserine: S787, S791, S793, and S795. A compositionally biased stretch (polar residues) spans 788-800 (GAGSRSPSPTASS). Y980 is modified (phosphotyrosine). The interval 1534-1568 (HSTQAPSPALRHASSNSSLQQPDQRSLHSTTASFD) is disordered. Positions 1546-1568 (ASSNSSLQQPDQRSLHSTTASFD) are enriched in polar residues. A Phosphoserine modification is found at S1551. A Rap-GAP domain is found at 1612 to 1819 (LRNVDLQKCR…EERNRSLDSV (208 aa)). The segment at 1903-1958 (ATGMSSASPRGPRKLGAPFKSVTKKHSLQHIAVGGGAGAGGDTPPESPTLPQRRFK) is disordered. A Phosphothreonine modification is found at T1945. Residue S1949 is modified to Phosphoserine.

This Drosophila melanogaster (Fruit fly) protein is Probable Rho GTPase-activating protein CG5521.